The following is a 350-amino-acid chain: tRNA-splicing endonuclease (350 aa).

Catalysis depends on residues Tyr286, His297, and Lys328.

Belongs to the tRNA-intron endonuclease family. Archaeal long subfamily. As to quaternary structure, homodimer.

It catalyses the reaction pretRNA = a 3'-half-tRNA molecule with a 5'-OH end + a 5'-half-tRNA molecule with a 2',3'-cyclic phosphate end + an intron with a 2',3'-cyclic phosphate and a 5'-hydroxyl terminus.. In terms of biological role, endonuclease that removes tRNA introns. Cleaves pre-tRNA at the 5'- and 3'-splice sites to release the intron. The products are an intron and two tRNA half-molecules bearing 2',3' cyclic phosphate and 5'-OH termini. Recognizes a pseudosymmetric substrate in which 2 bulged loops of 3 bases are separated by a stem of 4 bp. The chain is tRNA-splicing endonuclease from Methanosarcina acetivorans (strain ATCC 35395 / DSM 2834 / JCM 12185 / C2A).